Here is a 920-residue protein sequence, read N- to C-terminus: Bifunctional aspartokinase/homoserine dehydrogenase 1, chloroplastic (920 aa).

The tract at residues 1–21 (MRSLTVASRHPGAAFSTRRRP) is disordered. A chloroplast-targeting transit peptide spans 1–92 (MRSLTVASRH…EAIADLPKGD (92 aa)). The tract at residues 93–341 (MWSVHKFGGT…VSEAVILSTL (249 aa)) is aspartokinase. The interface stretch occupies residues 342 to 566 (SYQEAWEMSY…LSKTTLAVGI (225 aa)). ACT domains are found at residues 416-491 (VEGT…VIHN) and 497-574 (TVGL…LIGR). The interval 567–920 (IGPGLIGRTL…RLSSYLGAPS (354 aa)) is homoserine dehydrogenase. NAD(+) contacts are provided by Ile572 and Ala601. Ile572 lines the NADP(+) pocket. Ile572 contributes to the NADPH binding site. Residues Arg604, Thr653, and Lys677 each contribute to the NADP(+) site. Thr653 provides a ligand contact to NAD(+). Thr653 and Lys677 together coordinate NADPH. Na(+) contacts are provided by Glu704, Val707, Ala709, and Leu711. Residues Gly762 and Glu765 each coordinate NADP(+). L-homoserine is bound by residues Glu765 and Asp776. Lys780 serves as the catalytic Proton donor. NAD(+) is bound at residue Gly897. NADP(+) is bound at residue Gly897. Gly897 is a binding site for NADPH.

This sequence in the N-terminal section; belongs to the aspartokinase family. In the C-terminal section; belongs to the homoserine dehydrogenase family. In terms of assembly, homo- or heterodimer. A metal cation is required as a cofactor.

The protein localises to the plastid. Its subcellular location is the chloroplast. It catalyses the reaction L-homoserine + NADP(+) = L-aspartate 4-semialdehyde + NADPH + H(+). It carries out the reaction L-homoserine + NAD(+) = L-aspartate 4-semialdehyde + NADH + H(+). The catalysed reaction is L-aspartate + ATP = 4-phospho-L-aspartate + ADP. The protein operates within amino-acid biosynthesis; L-lysine biosynthesis via DAP pathway; (S)-tetrahydrodipicolinate from L-aspartate: step 1/4. It functions in the pathway amino-acid biosynthesis; L-methionine biosynthesis via de novo pathway; L-homoserine from L-aspartate: step 1/3. It participates in amino-acid biosynthesis; L-methionine biosynthesis via de novo pathway; L-homoserine from L-aspartate: step 3/3. Its pathway is amino-acid biosynthesis; L-threonine biosynthesis; L-threonine from L-aspartate: step 1/5. The protein operates within amino-acid biosynthesis; L-threonine biosynthesis; L-threonine from L-aspartate: step 3/5. In terms of biological role, bifunctional aspartate kinase and homoserine dehydrogenase that catalyzes the first and the third steps toward the synthesis of lysine, methionine and threonine from aspartate. This Zea mays (Maize) protein is Bifunctional aspartokinase/homoserine dehydrogenase 1, chloroplastic (AKHSDH1).